The primary structure comprises 202 residues: Putative 5'(3')-deoxyribonucleotidase (202 aa).

Residue Asp22 is the Nucleophile of the active site. Asp22, Asp24, and Asp156 together coordinate Mg(2+). The Proton donor role is filled by Asp24.

It belongs to the 5'(3')-deoxyribonucleotidase family. The cofactor is Mg(2+).

Functionally, dephosphorylates the 5' and 2'(3')-phosphates of deoxyribonucleotides. This Chlorobaculum tepidum (strain ATCC 49652 / DSM 12025 / NBRC 103806 / TLS) (Chlorobium tepidum) protein is Putative 5'(3')-deoxyribonucleotidase.